A 634-amino-acid chain; its full sequence is MSVETQKETLGFQTEVKQLLHLMIHSLYSNKEIFLRELISNASDAVDKLRFEALSKPELLEGGAELKIRVSFDKDAKTVTLEDNGIGMSREDVITHLGTIAKSGTADFMKNLTGDQKKDSHLIGQFGVGFYSAFIVADQVEVFSRRAGLPASEGVHWSSKGEGEFEVATIDKAERGTRIVLHLKSGEDEFADGWRLRNIIKKYSDHIALPIELPKEAAAAEGEEKPALEWETVNRASALWTRPRTEIKDEEYQEFYKHIAHDFENPLSWSHNKVEGKLEYSSLLYVPARAPFDLYQREAPKGLKLYVQRVFVMDQAESFLPLYLRFIKGVVDSNDLSLNVSREILQKDPIIDSMKSALTKRVLDMLEKLAKNEPEQYKGFWKNFGQVMKEGPAEDFANKEKIAGLLRFASTQGDDGEQNVSLADYLARAKEGQDKIYFLTGESYAQVKNSPHLEVFRKKGIEVLLLTDRIDEWLMSYLNEFDGKSFVDVARGDLDLGNLDSEEDKKAAEEVAKTKEGLVERIKTALGESVSEVRVSHRLTDSPAILAIGEQDLGLQMRQILEASGQKVPDSKPIFEFNPTHPLIEKLDGEQSEERFGDLSHILFDQAALAAGDSLKDPAAYVRRLNKLLVELSV.

Residues 1 to 342 (MSVETQKETL…SNDLSLNVSR (342 aa)) are a; substrate-binding. The b stretch occupies residues 343–559 (EILQKDPIID…EQDLGLQMRQ (217 aa)). Residues 560 to 634 (ILEASGQKVP…LNKLLVELSV (75 aa)) form a c region.

It belongs to the heat shock protein 90 family. As to quaternary structure, homodimer.

It localises to the cytoplasm. Functionally, molecular chaperone. Has ATPase activity. This Pseudomonas fluorescens (strain ATCC BAA-477 / NRRL B-23932 / Pf-5) protein is Chaperone protein HtpG.